The chain runs to 172 residues: Dual-action ribosomal maturation protein DarP (172 aa).

Belongs to the DarP family.

Its subcellular location is the cytoplasm. Member of a network of 50S ribosomal subunit biogenesis factors which assembles along the 30S-50S interface, preventing incorrect 23S rRNA structures from forming. Promotes peptidyl transferase center (PTC) maturation. This Ectopseudomonas mendocina (strain ymp) (Pseudomonas mendocina) protein is Dual-action ribosomal maturation protein DarP.